Reading from the N-terminus, the 422-residue chain is MAAADTCGAGTLSSRSVASEAGQGGTSSFQRKGKASGGPGGGPRLLSIAGTRPSVRNGQLLVSTGLPALDQLLGGGLAVGTLLLIEEDKYNIYSPLLFKYFMAEGIINGHTLLVASAKENPAKILQELPAPLLDDNSKKELEDVHSAKTPEPNVNMKIAWRYQLQPKMEVGPVSSSRFGHYYDLSKRIPWELLQSSKWHGFFLPEHISPDLKGESCFLSCGYMRLLEFIQKSVYAEGFDGANPQKKQKNILRIGIQNLGSPLWGDDICCKENCDNNHRLTKFLYILRGLLRSSLSACIITMPAHLVQNKSITTRVRNLSDTVVGLESFIGSERETNPLYKDYHGLIHIRKIPRLNNLTCDESDVKDLAFKLKRKLFTIERLHLPPDLSDTVGRSSKQDLAASTARLGAGCSSMAEGKKHLDF.

The disordered stretch occupies residues 1–49 (MAAADTCGAGTLSSRSVASEAGQGGTSSFQRKGKASGGPGGGPRLLSIA).

The protein belongs to the ELP4 family. In terms of assembly, component of the elongator complex which consists of ELP1, ELP2, ELP3, ELP4, ELP5 and ELP6. In terms of tissue distribution, expressed throughout the cerebellum.

It is found in the cytoplasm. The protein resides in the nucleus. It participates in tRNA modification; 5-methoxycarbonylmethyl-2-thiouridine-tRNA biosynthesis. Functionally, component of the elongator complex which is required for multiple tRNA modifications, including mcm5U (5-methoxycarbonylmethyl uridine), mcm5s2U (5-methoxycarbonylmethyl-2-thiouridine), and ncm5U (5-carbamoylmethyl uridine). The elongator complex catalyzes the formation of carboxymethyluridine in the wobble base at position 34 in tRNAs. The sequence is that of Elongator complex protein 4 (Elp4) from Mus musculus (Mouse).